An 861-amino-acid chain; its full sequence is MIGQITSGLFGGHDDSKKVKGTVVMMNKNVLDFTDLASSLTGKIFDVLGQKVSFQLISSVQGDPTNGLQGKHSNPAYLENSLFTLTPLTAGSETAFGVTFDWNEEFGVPGAFIIKNMHITEFFLKSLTLEDVPNHGKVHFVCNSWVYPSLNYKSDRIFFANQPYLPSETPELLRKYRENELLTLRGDGTGKREAWDRIYDYDIYNDLGNPDQGKENVRTTLGGSAEYPYPRRGRTGRPPTRTDPKVKSRIPLILSLDIYVPRDERFGHLKMSDFLTYALKSIVQFILPELHALFDGTPNEFDSFEDVLRLYEGGIKLPQGPLFKALTAAIPLEMIRELLRTDGEGILRFPTPLVIKDSKTAWRTDEEFAREMLAGVNPIIISRLQEFPPKSKLDPEAYGNQNSTITAEHIEDKLDGLTVDEAMNNNKLFILNHHDVIIPYLRRINTTITKTYASRTLLFLQDNGSLKPLAIELSLPHPDGDQFGVTSKVYTPTDQGVESSIWQLAKAYVAVNDTGVHQLISHWLNTHAVIEPFVIATNRQLSVLHPIHKLLYPHFRDTMNINASARQILVNAGGVLESTVFQSKFAMEMSAVVYKDWVFPDQALPADLVKRGVAVEDSSSPHGVRLLIEDYPYAVDGLEIWSAIKSWVTDYCSFYYGSDEEILKDNELQAWWKELREVGHGDKKNEPWWPEMKTPQELIDSCTTIIWIASALHAAVNFGQYPYAGYLPNRPTVSRRFMPEPGTPEYEELKRNPDKAFLKTITAQLQTLLGVSLVEILSRHTTDEIYLGQRESPEWTKDKEPLAAFDRFGKKLTDIEKQIIQRNGDNILTNRSGPVNAPYTLLFPTSEGGLTGKGIPNSVSI.

One can recognise a PLAT domain in the interval 33–160 (FTDLASSLTG…NYKSDRIFFA (128 aa)). Residues 163–861 (PYLPSETPEL…GKGIPNSVSI (699 aa)) enclose the Lipoxygenase domain. The tract at residues 220–245 (TLGGSAEYPYPRRGRTGRPPTRTDPK) is disordered. Fe cation is bound by residues His-522, His-527, His-713, Asn-717, and Ile-861.

This sequence belongs to the lipoxygenase family. As to quaternary structure, monomer. Fe cation serves as cofactor.

The protein resides in the cytoplasm. The enzyme catalyses (9Z,12Z)-octadecadienoate + O2 = (9S)-hydroperoxy-(10E,12Z)-octadecadienoate. It functions in the pathway lipid metabolism; oxylipin biosynthesis. Plant lipoxygenases may be involved in a number of diverse aspects of plant physiology including growth and development, pest resistance, and senescence or responses to wounding. Catalyzes the hydroperoxidation of lipids containing a cis,cis-1,4-pentadiene structure. In Solanum tuberosum (Potato), this protein is Probable linoleate 9S-lipoxygenase 8 (LOX1.8).